A 112-amino-acid polypeptide reads, in one-letter code: Ciliary microtubule inner protein 3 (112 aa).

The disordered stretch occupies residues 1–34 (MCKDSQKPSVPSHGPKTPSCKGVKAPHSSRPRAW).

Belongs to the CIMIP3-like family.

Its subcellular location is the cytoplasm. The protein resides in the cytoskeleton. The protein localises to the flagellum axoneme. The polypeptide is Ciliary microtubule inner protein 3 (Homo sapiens (Human)).